Consider the following 456-residue polypeptide: Glutathione reductase (456 aa).

Ser-14, Gly-15, Glu-34, Thr-41, Cys-42, and Lys-50 together coordinate FAD. Residue Ser-14 coordinates glutathione. An intrachain disulfide couples Cys-42 to Cys-47. Glutathione is bound at residue Tyr-99. Gly-115 contacts FAD. NADP(+) is bound by residues Ala-180, Ile-183, Glu-186, Arg-203, Arg-209, and Gly-267. Residue Asp-308 participates in FAD binding. Glu-315 contributes to the NADP(+) binding site. Position 317 (Thr-317) interacts with FAD. Arg-325 is a binding site for glutathione. Position 348 (Val-348) interacts with NADP(+). Position 445 (His-445) interacts with FAD. His-445 acts as the Proton acceptor in catalysis.

This sequence belongs to the class-I pyridine nucleotide-disulfide oxidoreductase family. In terms of assembly, homodimer. FAD serves as cofactor.

Its subcellular location is the cytoplasm. It carries out the reaction 2 glutathione + NADP(+) = glutathione disulfide + NADPH + H(+). Its function is as follows. Catalyzes the reduction of glutathione disulfide (GSSG) to reduced glutathione (GSH). Constitutes the major mechanism to maintain a high GSH:GSSG ratio in the cytosol. The chain is Glutathione reductase (gor) from Haemophilus influenzae (strain ATCC 51907 / DSM 11121 / KW20 / Rd).